The sequence spans 129 residues: Ferredoxin-1 (129 aa).

The 2Fe-2S ferredoxin-type domain maps to 29–120 (SDMDLDDEDY…EVKIVYNAKH (92 aa)). Positions 64, 69, 72, and 103 each coordinate [2Fe-2S] cluster.

It belongs to the 2Fe2S plant-type ferredoxin family. It depends on [2Fe-2S] cluster as a cofactor.

Functionally, ferredoxins are iron-sulfur proteins that transfer electrons in a wide variety of metabolic reactions. The chain is Ferredoxin-1 (fer1) from Haloarcula marismortui (strain ATCC 43049 / DSM 3752 / JCM 8966 / VKM B-1809) (Halobacterium marismortui).